The primary structure comprises 564 residues: Apyrase (564 aa).

An N-terminal signal peptide occupies residues 1–25; that stretch reads MAGKPGIQLFVIFLLLSSFAAVVWA. 6 residues coordinate a divalent metal cation: Asp48, His50, Asp99, Asn131, His234, and His258. AMP is bound at residue Arg371. The N-linked (GlcNAc...) asparagine glycan is linked to Asn391. AMP contacts are provided by Arg406, Phe425, and Asp515.

The protein belongs to the 5'-nucleotidase family. Requires a divalent metal cation as cofactor. In terms of tissue distribution, female salivary gland (at protein level). Low-level expression in male tissues. Not detected in female carcasses without salivary glands.

Its subcellular location is the secreted. It catalyses the reaction a ribonucleoside 5'-triphosphate + 2 H2O = a ribonucleoside 5'-phosphate + 2 phosphate + 2 H(+). In terms of biological role, facilitates hematophagy by inhibiting ADP-dependent platelet aggregation in the host. Cleaves adenosine triphosphate (ATP) and adenosine diphosphate (ADP) to adenosine monophosphate (AMP) and inorganic phosphate. May reduce probing time by facilitating the speed of locating blood. The chain is Apyrase from Aedes albopictus (Asian tiger mosquito).